The chain runs to 673 residues: Glycine--tRNA ligase beta subunit (673 aa).

Belongs to the class-II aminoacyl-tRNA synthetase family. As to quaternary structure, tetramer of two alpha and two beta subunits.

It localises to the cytoplasm. The catalysed reaction is tRNA(Gly) + glycine + ATP = glycyl-tRNA(Gly) + AMP + diphosphate. The polypeptide is Glycine--tRNA ligase beta subunit (Lactococcus lactis subsp. cremoris (strain SK11)).